The sequence spans 467 residues: Glutamate--tRNA ligase (467 aa).

The short motif at 9–19 (PSPTGYLHIGG) is the 'HIGH' region element. Positions 237–241 (KLSKR) match the 'KMSKS' region motif. ATP is bound at residue K240.

It belongs to the class-I aminoacyl-tRNA synthetase family. Glutamate--tRNA ligase type 1 subfamily. As to quaternary structure, monomer.

It localises to the cytoplasm. The enzyme catalyses tRNA(Glu) + L-glutamate + ATP = L-glutamyl-tRNA(Glu) + AMP + diphosphate. In terms of biological role, catalyzes the attachment of glutamate to tRNA(Glu) in a two-step reaction: glutamate is first activated by ATP to form Glu-AMP and then transferred to the acceptor end of tRNA(Glu). This is Glutamate--tRNA ligase from Xanthomonas axonopodis pv. citri (strain 306).